We begin with the raw amino-acid sequence, 237 residues long: Carbohydrate deacetylase (237 aa).

Positions 59 and 125 each coordinate Mg(2+).

The protein belongs to the YdjC deacetylase family. Mg(2+) is required as a cofactor.

Probably catalyzes the deacetylation of acetylated carbohydrates an important step in the degradation of oligosaccharides. The polypeptide is Carbohydrate deacetylase (Halalkalibacterium halodurans (strain ATCC BAA-125 / DSM 18197 / FERM 7344 / JCM 9153 / C-125) (Bacillus halodurans)).